The sequence spans 161 residues: Phosphopantetheine adenylyltransferase (161 aa).

Position 9 (serine 9) interacts with substrate. ATP is bound by residues 9–10 (SF) and histidine 17. Residues lysine 41, leucine 73, and lysine 87 each contribute to the substrate site. ATP contacts are provided by residues 88-90 (GLR), glutamate 98, and 122-128 (FSFLSSS).

The protein belongs to the bacterial CoaD family. Homohexamer. Mg(2+) is required as a cofactor.

It is found in the cytoplasm. It carries out the reaction (R)-4'-phosphopantetheine + ATP + H(+) = 3'-dephospho-CoA + diphosphate. The protein operates within cofactor biosynthesis; coenzyme A biosynthesis; CoA from (R)-pantothenate: step 4/5. Functionally, reversibly transfers an adenylyl group from ATP to 4'-phosphopantetheine, yielding dephospho-CoA (dPCoA) and pyrophosphate. The polypeptide is Phosphopantetheine adenylyltransferase (Nocardia farcinica (strain IFM 10152)).